The chain runs to 449 residues: Tryptophan--tRNA ligase (449 aa).

Residues Thr10–Thr12 and Gly18–Asn19 each bind ATP. A 'HIGH' region motif is present at residues Thr11–Asn19. Residue Asp143 coordinates L-tryptophan. ATP is bound by residues Gly155 to Asp157, Leu197, and Lys204 to Ser208. Residues Lys204–Ser208 carry the 'KMSKS' region motif.

This sequence belongs to the class-I aminoacyl-tRNA synthetase family. Homodimer.

The protein resides in the cytoplasm. The catalysed reaction is tRNA(Trp) + L-tryptophan + ATP = L-tryptophyl-tRNA(Trp) + AMP + diphosphate + H(+). Catalyzes the attachment of tryptophan to tRNA(Trp). In Pseudomonas syringae pv. tomato (strain ATCC BAA-871 / DC3000), this protein is Tryptophan--tRNA ligase.